Here is a 291-residue protein sequence, read N- to C-terminus: MKTGRIIKSISGVYRVDVDGEMYDTKPRGLFRKNKFSPIVGDVVDFEVENVTEGYIHHVHERKNEIKRPPVSNVDHLIIVMSAVEPDFSTQLLDRFLVIAHSYHMRPRILVTKKDLTSLEKQHDIEKLLEVYENMSYKTQFISINEDIEQVFSSWGDGLAVLSGQSGVGKSTLLNKYFPNIEIETQHISKALNRGRHTTRHVELFERAKGFIADTPGFSALDYDHIQKDEIKNYFMEIHEYGATCKFRDCNHINEPKCNVKAELENGNIAQFRYDHYLQLFKEISNRKERY.

In terms of domain architecture, CP-type G spans 63–221; the sequence is KNEIKRPPVS…IADTPGFSAL (159 aa). GTP-binding positions include 112-115 and 164-172; these read TKKD and GQSGVGKST. Residues Cys-245, Cys-250, His-252, and Cys-258 each coordinate Zn(2+).

It belongs to the TRAFAC class YlqF/YawG GTPase family. RsgA subfamily. As to quaternary structure, monomer. Associates with 30S ribosomal subunit, binds 16S rRNA. Zn(2+) is required as a cofactor.

Its subcellular location is the cytoplasm. Functionally, one of several proteins that assist in the late maturation steps of the functional core of the 30S ribosomal subunit. Helps release RbfA from mature subunits. May play a role in the assembly of ribosomal proteins into the subunit. Circularly permuted GTPase that catalyzes slow GTP hydrolysis, GTPase activity is stimulated by the 30S ribosomal subunit. This chain is Small ribosomal subunit biogenesis GTPase RsgA, found in Staphylococcus saprophyticus subsp. saprophyticus (strain ATCC 15305 / DSM 20229 / NCIMB 8711 / NCTC 7292 / S-41).